We begin with the raw amino-acid sequence, 56 residues long: MGNKLRKCTQCNIYTLKDNCPECGESSGNPLPARFSPLDTYGKYRRISKKREMEHA.

Belongs to the NOP10 family.

Its function is as follows. Involved in ribosome biogenesis; more specifically in 18S rRNA pseudouridylation and in cleavage of pre-rRNA. This is Ribosome biogenesis protein Nop10 from Methanococcoides burtonii (strain DSM 6242 / NBRC 107633 / OCM 468 / ACE-M).